Consider the following 525-residue polypeptide: Glucose-6-phosphate isomerase (525 aa).

Glutamate 356 acts as the Proton donor in catalysis. Residues histidine 387 and lysine 502 contribute to the active site.

Belongs to the GPI family.

It is found in the cytoplasm. It catalyses the reaction alpha-D-glucose 6-phosphate = beta-D-fructose 6-phosphate. The protein operates within carbohydrate biosynthesis; gluconeogenesis. It participates in carbohydrate degradation; glycolysis; D-glyceraldehyde 3-phosphate and glycerone phosphate from D-glucose: step 2/4. In terms of biological role, catalyzes the reversible isomerization of glucose-6-phosphate to fructose-6-phosphate. The sequence is that of Glucose-6-phosphate isomerase from Treponema denticola (strain ATCC 35405 / DSM 14222 / CIP 103919 / JCM 8153 / KCTC 15104).